The chain runs to 558 residues: Acylase ACY 1 proenzyme (558 aa).

Catalysis depends on Thr-368, which acts as the Nucleophile.

Belongs to the gamma-glutamyltransferase family. In terms of assembly, dimer of two non-identical chains processed from the same precursor.

The enzyme catalyses (7R)-7-(4-carboxybutanamido)cephalosporanate + H2O = (7R)-7-aminocephalosporanate + glutarate. It carries out the reaction an N-terminal (5-L-glutamyl)-[peptide] + an alpha-amino acid = 5-L-glutamyl amino acid + an N-terminal L-alpha-aminoacyl-[peptide]. The catalysed reaction is glutathione + H2O = L-cysteinylglycine + L-glutamate. It catalyses the reaction an S-substituted glutathione + H2O = an S-substituted L-cysteinylglycine + L-glutamate. Functionally, besides the cephalosporin acylase I activity which converts GL-7ACA into 7-ACA; this enzyme displays some gamma glutamyltranspeptidase activity. This chain is Acylase ACY 1 proenzyme (acyI), found in Pseudomonas sp. (strain V22).